Reading from the N-terminus, the 295-residue chain is Sperm acrosome membrane-associated protein 1 (295 aa).

The first 29 residues, 1-29 (MSPGGAGCSAGLLLTVGWLLLAGLQSTCG), serve as a signal peptide directing secretion. Residues 30–220 (INVTAVQDPS…SRPDTDAVLV (191 aa)) lie on the Extracellular side of the membrane. A disordered region spans residues 39–71 (SLVSEGENEGEEEAENDSEVENEPQAEAEQDVS). Positions 44–68 (GENEGEEEAENDSEVENEPQAEAEQ) are enriched in acidic residues. A glycan (N-linked (GlcNAc...) asparagine) is linked at Asn-72. Residues 221 to 241 (FVLTIGVIICIFVIFVLIFII) form a helical membrane-spanning segment. Residues 242 to 295 (VNWATVKDFWASKASTTEIQSELSSMKYKDSTSLDQSPTEIPGHEDDALSEWNE) are Cytoplasmic-facing. The residue at position 256 (Ser-256) is a Phosphoserine. The disordered stretch occupies residues 263–295 (ELSSMKYKDSTSLDQSPTEIPGHEDDALSEWNE). The residue at position 269 (Tyr-269) is a Phosphotyrosine. 2 positions are modified to phosphoserine: Ser-278 and Ser-291.

As to quaternary structure, interacts with CYLC1; the interaction may be relevant for proper acrosome attachment to the nuclear envelope. Post-translationally, N-glycosylated. As to expression, detected in spermatozoa (at protein level).

The protein localises to the cytoplasmic vesicle. It localises to the secretory vesicle. The protein resides in the acrosome inner membrane. Plays a role in acrosome expansion and establishment of normal sperm morphology during spermatogenesis. Important for male fertility. The chain is Sperm acrosome membrane-associated protein 1 from Sus scrofa (Pig).